The primary structure comprises 322 residues: Transaldolase (322 aa).

The active-site Schiff-base intermediate with substrate is the Lys132. Phosphoserine occurs at positions 268 and 269.

This sequence belongs to the transaldolase family. Type 1 subfamily. Homodimer.

The catalysed reaction is D-sedoheptulose 7-phosphate + D-glyceraldehyde 3-phosphate = D-erythrose 4-phosphate + beta-D-fructose 6-phosphate. The protein operates within carbohydrate degradation; pentose phosphate pathway; D-glyceraldehyde 3-phosphate and beta-D-fructose 6-phosphate from D-ribose 5-phosphate and D-xylulose 5-phosphate (non-oxidative stage): step 2/3. Functionally, transaldolase is important for the balance of metabolites in the pentose-phosphate pathway. The sequence is that of Transaldolase (tal1) from Schizosaccharomyces pombe (strain 972 / ATCC 24843) (Fission yeast).